We begin with the raw amino-acid sequence, 119 residues long: Immunoglobulin heavy variable 3-73 (119 aa).

A signal peptide spans 1 to 19 (MEFGLSWVFLVAILKGVQC). The framework-1 stretch occupies residues 20-44 (EVQLVESGGGLVQPGGSLKLSCAAS). Positions 20-119 (EVQLVESGGG…EDTAVYYCTR (100 aa)) constitute an Ig-like domain. Cysteines 41 and 117 form a disulfide. The segment at 45 to 52 (GFTFSGSA) is complementarity-determining-1. Residues 53–69 (MHWVRQASGKGLEWVGR) are framework-2. The complementarity-determining-2 stretch occupies residues 70–79 (IRSKANSYAT). The tract at residues 80-117 (AYAASVKGRFTISRDDSKNTAYLQMNSLKTEDTAVYYC) is framework-3. A complementarity-determining-3 region spans residues 118–119 (TR).

As to quaternary structure, immunoglobulins are composed of two identical heavy chains and two identical light chains; disulfide-linked.

The protein resides in the secreted. It localises to the cell membrane. V region of the variable domain of immunoglobulin heavy chains that participates in the antigen recognition. Immunoglobulins, also known as antibodies, are membrane-bound or secreted glycoproteins produced by B lymphocytes. In the recognition phase of humoral immunity, the membrane-bound immunoglobulins serve as receptors which, upon binding of a specific antigen, trigger the clonal expansion and differentiation of B lymphocytes into immunoglobulins-secreting plasma cells. Secreted immunoglobulins mediate the effector phase of humoral immunity, which results in the elimination of bound antigens. The antigen binding site is formed by the variable domain of one heavy chain, together with that of its associated light chain. Thus, each immunoglobulin has two antigen binding sites with remarkable affinity for a particular antigen. The variable domains are assembled by a process called V-(D)-J rearrangement and can then be subjected to somatic hypermutations which, after exposure to antigen and selection, allow affinity maturation for a particular antigen. In Homo sapiens (Human), this protein is Immunoglobulin heavy variable 3-73.